An 876-amino-acid polypeptide reads, in one-letter code: Leucine--tRNA ligase (876 aa).

Positions 42–52 (PYPSGKLHMGH) match the 'HIGH' region motif. The short motif at 634–638 (KMSKS) is the 'KMSKS' region element. Lys637 is an ATP binding site.

It belongs to the class-I aminoacyl-tRNA synthetase family.

The protein resides in the cytoplasm. It catalyses the reaction tRNA(Leu) + L-leucine + ATP = L-leucyl-tRNA(Leu) + AMP + diphosphate. This is Leucine--tRNA ligase from Neisseria gonorrhoeae (strain ATCC 700825 / FA 1090).